The following is a 110-amino-acid chain: NADH-quinone oxidoreductase subunit K (110 aa).

3 helical membrane passes run 13–33, 38–58, and 70–90; these read VTHG…GIII, ILIL…NFLI, and VFVF…LAIV.

Belongs to the complex I subunit 4L family. As to quaternary structure, NDH-1 is composed of 14 different subunits. Subunits NuoA, H, J, K, L, M, N constitute the membrane sector of the complex.

It localises to the cell inner membrane. The catalysed reaction is a quinone + NADH + 5 H(+)(in) = a quinol + NAD(+) + 4 H(+)(out). Functionally, NDH-1 shuttles electrons from NADH, via FMN and iron-sulfur (Fe-S) centers, to quinones in the respiratory chain. The immediate electron acceptor for the enzyme in this species is believed to be ubiquinone. Couples the redox reaction to proton translocation (for every two electrons transferred, four hydrogen ions are translocated across the cytoplasmic membrane), and thus conserves the redox energy in a proton gradient. This is NADH-quinone oxidoreductase subunit K from Francisella tularensis subsp. holarctica (strain FTNF002-00 / FTA).